A 343-amino-acid chain; its full sequence is Glucokinase (343 aa).

18–23 (GDIGGT) is a binding site for ATP.

The protein belongs to the bacterial glucokinase family.

It is found in the cytoplasm. It catalyses the reaction D-glucose + ATP = D-glucose 6-phosphate + ADP + H(+). The polypeptide is Glucokinase (Brucella abortus (strain 2308)).